The chain runs to 226 residues: 7-cyano-7-deazaguanine synthase (226 aa).

ATP is bound at residue 7 to 17 (ISGGMDSLVTT). Positions 187, 195, 198, and 201 each coordinate Zn(2+).

This sequence belongs to the QueC family. Zn(2+) serves as cofactor.

The catalysed reaction is 7-carboxy-7-deazaguanine + NH4(+) + ATP = 7-cyano-7-deazaguanine + ADP + phosphate + H2O + H(+). Its pathway is purine metabolism; 7-cyano-7-deazaguanine biosynthesis. Catalyzes the ATP-dependent conversion of 7-carboxy-7-deazaguanine (CDG) to 7-cyano-7-deazaguanine (preQ(0)). This chain is 7-cyano-7-deazaguanine synthase, found in Chlorobium limicola (strain DSM 245 / NBRC 103803 / 6330).